Here is a 600-residue protein sequence, read N- to C-terminus: Elongation factor 4 (600 aa).

A tr-type G domain is found at 5 to 187; it reads KYIRNFSIIA…AIVNKLHPPK (183 aa). GTP-binding positions include 17–22 and 134–137; these read DHGKST and NKID.

It belongs to the TRAFAC class translation factor GTPase superfamily. Classic translation factor GTPase family. LepA subfamily.

The protein resides in the cell inner membrane. It carries out the reaction GTP + H2O = GDP + phosphate + H(+). Its function is as follows. Required for accurate and efficient protein synthesis under certain stress conditions. May act as a fidelity factor of the translation reaction, by catalyzing a one-codon backward translocation of tRNAs on improperly translocated ribosomes. Back-translocation proceeds from a post-translocation (POST) complex to a pre-translocation (PRE) complex, thus giving elongation factor G a second chance to translocate the tRNAs correctly. Binds to ribosomes in a GTP-dependent manner. This chain is Elongation factor 4, found in Rickettsia akari (strain Hartford).